A 400-amino-acid chain; its full sequence is MKLQEIKNIDITGKKVFIRCDFNVPMDEYNNITDDRRIRSALNTIRYCIDHDCSVILSSHFGRPKGGFEEKYSLLPIAKRLHILLKQDIKMAPGVICDETLQMAKELKAGEILLLENMRFEAGETKNDEELSKKLASMAEIYINDAFGVSHRAHASVEGISKYFDIEHKAAGFLMAKEIKFFHHIIHNPKRPFIAIVGGSKVSGKLEALYNLIPKVDKIIIGGGMAFTFLKARGHEIGNSLVEDDLIPEALKIMEEAKSKGVKLYLPVDVVAAEAFDAEAIAKIATIQEMPKGWMGLDIGPASALLFSEALSDANTILWNGPMGVYEMDRFAKGSTKISHAVANSYATTVVGGGDTADLVRVTGDEDDMTFISTGGGASLELIEGKVLPGVKALVIEEND.

Substrate contacts are provided by residues 21–23 (DFN), R37, 60–63 (HFGR), R119, and R152. Residues K205, G296, E327, and 353-356 (GGDT) each bind ATP.

The protein belongs to the phosphoglycerate kinase family. In terms of assembly, monomer.

It localises to the cytoplasm. The enzyme catalyses (2R)-3-phosphoglycerate + ATP = (2R)-3-phospho-glyceroyl phosphate + ADP. It functions in the pathway carbohydrate degradation; glycolysis; pyruvate from D-glyceraldehyde 3-phosphate: step 2/5. This is Phosphoglycerate kinase from Aliarcobacter butzleri (strain RM4018) (Arcobacter butzleri).